The chain runs to 270 residues: Allergen Asp f 7 (270 aa).

The signal sequence occupies residues 1–21 (MAPIFKSLALVSALFAAISSA). Disordered regions lie at residues 53-97 (YPTP…QPTQ) and 113-167 (ADSA…GPCS). A compositionally biased stretch (low complexity) spans 63 to 81 (VVESTPTPTPSAAPEQAEP). A compositionally biased stretch (polar residues) spans 83 to 97 (ETSTQPETTKSQPTQ). A compositionally biased stretch (low complexity) spans 127–149 (PATTAAPSTSTTTQAAPSAPPAA). A compositionally biased stretch (polar residues) spans 150 to 162 (NSGSTEKAASSGY).

The protein is Allergen Asp f 7 of Aspergillus fumigatus (strain ATCC MYA-4609 / CBS 101355 / FGSC A1100 / Af293) (Neosartorya fumigata).